A 152-amino-acid chain; its full sequence is Clitocypin-4/-3 (152 aa).

The protein belongs to the protease inhibitor I48 family. In terms of assembly, homodimer.

Its function is as follows. Binds and inhibits cysteine proteinases. Inhibits most strongly papain and cathepsin L, more weakly bromelain and cathepsin B while it is completely ineffective against cathepsin H. This Clitocybe nebularis (Clouded agaric) protein is Clitocypin-4/-3 (clt4).